The primary structure comprises 748 residues: SNF-related serine/threonine-protein kinase (748 aa).

A Protein kinase domain is found at 16 to 269; it reads YDLDKTLGRG…LEEIESHPWL (254 aa). Residues 22-30 and lysine 45 each bind ATP; that span reads LGRGHFAVV. The Proton acceptor role is filled by aspartate 139. Phosphoserine is present on serine 162. Position 173 is a phosphothreonine; by LKB1 (threonine 173). Residues 291–334 form the UBA domain; it reads SEEEHNSIIQRMVLGDIADRDAIVEALETNRYNHITATYFLLAE. Serine 362, serine 390, serine 482, serine 495, and serine 518 each carry phosphoserine. Positions 383–415 are disordered; sequence SHATVPQSPARAGDNVLNGHRSKGLCDPAKKDE. The span at 491–503 shows a compositional bias: acidic residues; sequence EEGESDDEFDMDE. Residues 491 to 640 form a disordered region; that stretch reads EEGESDDEFD…SPSPASASAA (150 aa). Basic residues predominate over residues 522–532; sequence VHKRYHRRKSQ. Residues 533 to 542 are compositionally biased toward low complexity; the sequence is GRGSSCSSSE. The residue at position 534 (arginine 534) is an Omega-N-methylarginine. Residues 549–558 are compositionally biased toward basic and acidic residues; sequence ESRRRLDKDS. Gly residues-rich tracts occupy residues 575 to 592 and 600 to 614; these read GSEGDGGGQSKPSSGGGV and QGTGGGSQGGSGGTP. A Phosphoserine modification is found at serine 606. Over residues 629–640 the composition is skewed to low complexity; the sequence is SSSPSPASASAA.

Belongs to the protein kinase superfamily. CAMK Ser/Thr protein kinase family. The cofactor is Mg(2+). Autophosphorylated. Phosphorylation on Thr-173 by STK11/LKB1 in complex with STE20-related adapter-alpha (STRADA) pseudo kinase and CAB39. Ubiquitously expressed in all tissues examined.

The protein resides in the nucleus. It carries out the reaction L-seryl-[protein] + ATP = O-phospho-L-seryl-[protein] + ADP + H(+). It catalyses the reaction L-threonyl-[protein] + ATP = O-phospho-L-threonyl-[protein] + ADP + H(+). Its activity is regulated as follows. Activated by phosphorylation on Thr-173. Functionally, may play a role in hematopoietic cell proliferation or differentiation. Potential mediator of neuronal apoptosis. The sequence is that of SNF-related serine/threonine-protein kinase from Mus musculus (Mouse).